A 658-amino-acid polypeptide reads, in one-letter code: Katanin p80 WD40 repeat-containing subunit B1 (658 aa).

The segment at 1–284 (MATPVVTKTA…VADLAICNDQ (284 aa)) is interaction with dynein. The interaction with centrosomes stretch occupies residues 1-300 (MATPVVTKTA…SQSNVSSYVV (300 aa)). WD repeat units lie at residues 18-58 (AHAS…CIMS), 61-100 (GHTS…ILRT), 103-142 (GHKA…CVFR), 145-184 (GHSQ…MMSE), 187-226 (GHTG…VVSC), and 229-269 (GEPG…DVVL). The interaction with PAFAH1B1 stretch occupies residues 285 to 437 (LIGVAFSQSN…LPQLPVPNLE (153 aa)). Residues 311–329 (VTQDPVQANQPLTQQTPNP) are compositionally biased toward polar residues. Disordered regions lie at residues 311–419 (VTQD…EVSK) and 434–458 (PNLE…PDII). Basic and acidic residues predominate over residues 352–374 (HNSESERRSPSSEDDRDERESRA). The residue at position 395 (T395) is a Phosphothreonine. The interval 436-658 (LEVPARPSVM…ELHLLMASLD (223 aa)) is interaction with KATNA1 and NDEL1.

This sequence belongs to the WD repeat KATNB1 family. In terms of assembly, interacts with KATNA1. This interaction enhances the microtubule binding and severing activity of KATNA1 and also targets this activity to the centrosome. This interaction is weakly competed by KATNBL1 which has a lower affinity for it. Interacts with ASPM; the katanin complex formation KATNA1:KATNB1 is required for the association of ASPM. Interacts with dynein, microtubules, NDEL1 and PAFAH1B1. Interacts with KATNAL1; this interaction is weakly competed by KATNBL1 which has a lower affinity for it. Interacts with CAMSAP2 and CAMSAP3; leading to regulate the length of CAMSAP-decorated microtubule stretches.

Its subcellular location is the cytoplasm. It localises to the cytoskeleton. The protein resides in the microtubule organizing center. The protein localises to the centrosome. It is found in the spindle pole. Its subcellular location is the spindle. Its function is as follows. Participates in a complex which severs microtubules in an ATP-dependent manner. May act to target the enzymatic subunit of this complex to sites of action such as the centrosome. Microtubule severing may promote rapid reorganization of cellular microtubule arrays and the release of microtubules from the centrosome following nucleation. Microtubule release from the mitotic spindle poles may allow depolymerization of the microtubule end proximal to the spindle pole, leading to poleward microtubule flux and poleward motion of chromosome. The function in regulating microtubule dynamics at spindle poles seems to depend on the association of the katanin KATNA1:KATNB1 complex with ASPM which recruits it to microtubules. Reversely KATNA1:KATNB1 can enhance ASPM blocking activity on microtubule minus-end growth. Microtubule release within the cell body of neurons may be required for their transport into neuronal processes by microtubule-dependent motor proteins. This transport is required for axonal growth. This Mus musculus (Mouse) protein is Katanin p80 WD40 repeat-containing subunit B1 (Katnb1).